Consider the following 116-residue polypeptide: MAGRSGDSDEDLLKAVRLIKFLYQSNPPPNPEGTRQARRNRRRRWRERQRQIHSISERILSTYLGRSAEPVPLQLPPLERLTLDCNEDCGTSGTQGVGSPQILVESPTVLESGTKE.

A phosphoserine; by host CK2 mark is found at Ser5 and Ser8. The interval 18-26 (LIKFLYQSN) is homomultimerization. The disordered stretch occupies residues 23-49 (YQSNPPPNPEGTRQARRNRRRRWRERQ). The Nuclear localization signal and RNA-binding (RRE) signature appears at 34–50 (TRQARRNRRRRWRERQR). A compositionally biased stretch (basic residues) spans 36–47 (QARRNRRRRWRE). The Nuclear export signal and binding to XPO1 motif lies at 73–84 (LQLPPLERLTLD). Phosphoserine; by host is present on residues Ser92 and Ser99. Positions 92–116 (SGTQGVGSPQILVESPTVLESGTKE) are disordered.

It belongs to the HIV-1 REV protein family. As to quaternary structure, homomultimer; when bound to the RRE. Multimeric assembly is essential for activity and may involve XPO1. Binds to human KPNB1, XPO1, TNPO1, RANBP5 and IPO7. Interacts with the viral Integrase. Interacts with human KHDRBS1. Interacts with human NAP1; this interaction decreases Rev multimerization and stimulates its activity. Interacts with human DEAD-box helicases DDX3 and DDX24; these interactions may serve for viral RNA export to the cytoplasm and packaging, respectively. Interacts with human PSIP1; this interaction may inhibit HIV-1 DNA integration by promoting dissociation of the Integrase-LEDGF/p75 complex. Post-translationally, asymmetrically arginine dimethylated at one site by host PRMT6. Methylation impairs the RNA-binding activity and export of viral RNA from the nucleus to the cytoplasm. In terms of processing, phosphorylated by protein kinase CK2. Presence of, and maybe binding to the N-terminus of the regulatory beta subunit of CK2 is necessary for CK2-mediated Rev's phosphorylation.

The protein resides in the host nucleus. It localises to the host nucleolus. Its subcellular location is the host cytoplasm. Its function is as follows. Escorts unspliced or incompletely spliced viral pre-mRNAs (late transcripts) out of the nucleus of infected cells. These pre-mRNAs carry a recognition sequence called Rev responsive element (RRE) located in the env gene, that is not present in fully spliced viral mRNAs (early transcripts). This function is essential since most viral proteins are translated from unspliced or partially spliced pre-mRNAs which cannot exit the nucleus by the pathway used by fully processed cellular mRNAs. Rev itself is translated from a fully spliced mRNA that readily exits the nucleus. Rev's nuclear localization signal (NLS) binds directly to KPNB1/Importin beta-1 without previous binding to KPNA1/Importin alpha-1. KPNB1 binds to the GDP bound form of RAN (Ran-GDP) and targets Rev to the nucleus. In the nucleus, the conversion from Ran-GDP to Ran-GTP dissociates Rev from KPNB1 and allows Rev's binding to the RRE in viral pre-mRNAs. Rev multimerization on the RRE via cooperative assembly exposes its nuclear export signal (NES) to the surface. Rev can then form a complex with XPO1/CRM1 and Ran-GTP, leading to nuclear export of the complex. Conversion from Ran-GTP to Ran-GDP mediates dissociation of the Rev/RRE/XPO1/RAN complex, so that Rev can return to the nucleus for a subsequent round of export. Beside KPNB1, also seems to interact with TNPO1/Transportin-1, RANBP5/IPO5 and IPO7/RANBP7 for nuclear import. The nucleoporin-like HRB/RIP is an essential cofactor that probably indirectly interacts with Rev to release HIV RNAs from the perinuclear region to the cytoplasm. This Human immunodeficiency virus type 1 group M subtype B (isolate BRU/LAI) (HIV-1) protein is Protein Rev.